A 353-amino-acid chain; its full sequence is uncharacterized protein (353 aa).

An N-terminal signal peptide occupies residues 1–23; it reads MSAGKGLLLVICLLFLPLKSAMA.

It to E.coli YqiI.

May be involved in a fimbrial system chaperoned by YbgP and exported by YbgQ. This is an uncharacterized protein from Escherichia coli (strain K12).